A 330-amino-acid polypeptide reads, in one-letter code: Aspartate--ammonia ligase (330 aa).

The protein belongs to the class-II aminoacyl-tRNA synthetase family. AsnA subfamily.

It is found in the cytoplasm. The enzyme catalyses L-aspartate + NH4(+) + ATP = L-asparagine + AMP + diphosphate + H(+). It participates in amino-acid biosynthesis; L-asparagine biosynthesis; L-asparagine from L-aspartate (ammonia route): step 1/1. The sequence is that of Aspartate--ammonia ligase from Shigella dysenteriae serotype 1 (strain Sd197).